The following is a 134-amino-acid chain: C-C motif chemokine 21 (134 aa).

A signal peptide spans 1–23 (MAQSLALSLLILVLAFGIPRTQG). 3 cysteine pairs are disulfide-bonded: Cys31-Cys57, Cys32-Cys75, and Cys103-Cys122. Positions 88 to 134 (QHLDKTPSPQKPAQGCRKDRGASKTGKKGKGSKGCKRTERSQTPKGP) are disordered. A C-terminal basic extension region spans residues 98–134 (KPAQGCRKDRGASKTGKKGKGSKGCKRTERSQTPKGP). Positions 112-122 (TGKKGKGSKGC) are enriched in basic residues. Residues 123–134 (KRTERSQTPKGP) are compositionally biased toward basic and acidic residues.

This sequence belongs to the intercrine beta (chemokine CC) family. As to quaternary structure, monomer. Binds to CCR7. Interacts with PDPN; relocalizes PDPN to the basolateral membrane. Interacts with TNFAIP6 (via Link domain). Interacts with GPR174. In terms of tissue distribution, highly expressed in high endothelial venules of lymph nodes, spleen and appendix. Intermediate levels found in small intestine, thyroid gland and trachea. Low level expression in thymus, bone marrow, liver, and pancreas. Also found in tonsil, fetal heart and fetal spleen.

The protein resides in the secreted. In terms of biological role, inhibits hemopoiesis and stimulates chemotaxis. Chemotactic in vitro for thymocytes and activated T-cells, but not for B-cells, macrophages, or neutrophils. Shows preferential activity towards naive T-cells. May play a role in mediating homing of lymphocytes to secondary lymphoid organs. Binds to atypical chemokine receptor ACKR4 and mediates the recruitment of beta-arrestin (ARRB1/2) to ACKR4. The polypeptide is C-C motif chemokine 21 (CCL21) (Homo sapiens (Human)).